The sequence spans 366 residues: NADH-quinone oxidoreductase subunit D (366 aa).

It belongs to the complex I 49 kDa subunit family. As to quaternary structure, NDH-1 is composed of 14 different subunits. Subunits NuoB, C, D, E, F, and G constitute the peripheral sector of the complex.

The protein resides in the cell membrane. The enzyme catalyses a quinone + NADH + 5 H(+)(in) = a quinol + NAD(+) + 4 H(+)(out). In terms of biological role, NDH-1 shuttles electrons from NADH, via FMN and iron-sulfur (Fe-S) centers, to quinones in the respiratory chain. The immediate electron acceptor for the enzyme in this species is believed to be a menaquinone. Couples the redox reaction to proton translocation (for every two electrons transferred, four hydrogen ions are translocated across the cytoplasmic membrane), and thus conserves the redox energy in a proton gradient. The polypeptide is NADH-quinone oxidoreductase subunit D (Bacillus anthracis).